A 1145-amino-acid chain; its full sequence is Error-prone DNA polymerase (1145 aa).

The protein belongs to the DNA polymerase type-C family. DnaE2 subfamily.

Its subcellular location is the cytoplasm. It carries out the reaction DNA(n) + a 2'-deoxyribonucleoside 5'-triphosphate = DNA(n+1) + diphosphate. In terms of biological role, DNA polymerase involved in damage-induced mutagenesis and translesion synthesis (TLS). It is not the major replicative DNA polymerase. The chain is Error-prone DNA polymerase from Rhodopirellula baltica (strain DSM 10527 / NCIMB 13988 / SH1).